A 1083-amino-acid polypeptide reads, in one-letter code: UPF0182 protein BAD_0641 (1083 aa).

Residues 1-72 (MSFFDMFGPM…TSKPNRPRKP (72 aa)) form a disordered region. The next 7 helical transmembrane spans lie at 78–98 (IFIG…ALAQ), 125–145 (LWLA…TLAI), 178–198 (IAVV…NANW), 239–259 (SLLL…MGGI), 281–301 (IGIW…LGVF), 325–345 (VTFI…LWIM), and 372–392 (VAIA…PVLL). The tract at residues 976 to 1061 (DSGASAGDAE…SDAAMKKGDW (86 aa)) is disordered. 2 stretches are compositionally biased toward basic and acidic residues: residues 991-1013 (TDDK…DGKQ) and 1050-1060 (KDSDAAMKKGD).

It belongs to the UPF0182 family.

The protein localises to the cell membrane. This Bifidobacterium adolescentis (strain ATCC 15703 / DSM 20083 / NCTC 11814 / E194a) protein is UPF0182 protein BAD_0641.